The sequence spans 28 residues: Beta-bungarotoxin B chain-like (28 aa).

A signal peptide spans 1 to 24 (MSSGGLLLLLGLLTLCAELTPVSS).

In terms of assembly, heterodimer; disulfide-linked. The A chains have phospholipase A2 activity and the B chains show homology with the basic protease inhibitors. As to expression, expressed by the venom gland.

The protein resides in the secreted. Its function is as follows. Beta-1-bungarotoxin is a presynaptic neurotoxin of the venom. The B chain is homologous to venom basic protease inhibitors but has no protease inhibitor activity and blocks voltage-gated potassium channels (Kv). This Bungarus multicinctus (Many-banded krait) protein is Beta-bungarotoxin B chain-like.